The primary structure comprises 313 residues: Acetaldehyde dehydrogenase (313 aa).

13 to 16 (SGNI) lines the NAD(+) pocket. The active-site Acyl-thioester intermediate is Cys-133. NAD(+) is bound by residues 164 to 172 (SAGPGTRAN) and Asn-291.

Belongs to the acetaldehyde dehydrogenase family.

The enzyme catalyses acetaldehyde + NAD(+) + CoA = acetyl-CoA + NADH + H(+). This is Acetaldehyde dehydrogenase from Cupriavidus pinatubonensis (strain JMP 134 / LMG 1197) (Cupriavidus necator (strain JMP 134)).